The sequence spans 844 residues: RPA-related protein RADX (844 aa).

Positions 228 to 331 form a DNA-binding region, OB; that stretch reads WHNRKNFPAL…LISTMEICLN (104 aa). Disordered stretches follow at residues 571–609 and 626–664; these read PASE…RPMD and GPTA…TGKS. Residues 572 to 587 show a composition bias toward polar residues; it reads ASETLQNASPPSTSQA. Residues 590-608 show a composition bias toward basic and acidic residues; that stretch reads KEGHYHERGSKRSQDDRPM. The segment covering 652–662 has biased composition (polar residues); that stretch reads SRENSTANATG.

The protein resides in the chromosome. Single-stranded DNA-binding protein recruited to replication forks to maintain genome stability. Prevents fork collapse by antagonizing the accumulation of RAD51 at forks to ensure the proper balance of fork remodeling and protection without interfering with the capacity of cells to complete homologous recombination of double-strand breaks. In Rattus norvegicus (Rat), this protein is RPA-related protein RADX.